The following is an 89-amino-acid chain: Small ribosomal subunit protein uS15 (89 aa).

The protein belongs to the universal ribosomal protein uS15 family. Part of the 30S ribosomal subunit. Forms a bridge to the 50S subunit in the 70S ribosome, contacting the 23S rRNA.

Functionally, one of the primary rRNA binding proteins, it binds directly to 16S rRNA where it helps nucleate assembly of the platform of the 30S subunit by binding and bridging several RNA helices of the 16S rRNA. In terms of biological role, forms an intersubunit bridge (bridge B4) with the 23S rRNA of the 50S subunit in the ribosome. This chain is Small ribosomal subunit protein uS15, found in Vibrio vulnificus (strain YJ016).